The sequence spans 337 residues: uncharacterized protein (337 aa).

Positions 5–235 (VEFDNVSRLY…PRTPFVAGFV (231 aa)) constitute an ABC transporter domain. Position 37–44 (37–44 (GPSGSGKT)) interacts with ATP.

The protein belongs to the ABC transporter superfamily.

Probably part of the ABC transporter complex YdcSTUV. Probably responsible for energy coupling to the transport system. This is an uncharacterized protein from Escherichia coli (strain K12).